We begin with the raw amino-acid sequence, 299 residues long: Lathosterol oxidase (299 aa).

A run of 3 helical transmembrane segments spans residues 32–52, 79–99, and 117–137; these read ISLL…CATL, FTVQ…LLEI, and FELV…IYWI. Residues 124 to 252 form the Fatty acid hydroxylase domain; sequence ISFLFFTDMF…YFTLWDRIGG (129 aa). Residues 138–143 carry the Histidine box-1 motif; the sequence is HRGLHH. The Histidine box-2 motif lies at 151 to 155; that stretch reads HKPHH. The helical transmembrane segment at 186-206 threads the bilayer; sequence IFPLHKVVYLSLYILVNIWTI. The Histidine box-3 motif lies at 228–233; sequence HHTDHH. Serine 253 carries the post-translational modification Phosphoserine. Residues 274–299 form a disordered region; it reads EGKRSSHSGNGCKNEKLFNGEFTKTE. Positions 286–299 are enriched in basic and acidic residues; it reads KNEKLFNGEFTKTE.

It belongs to the sterol desaturase family. The cofactor is Fe cation.

It is found in the endoplasmic reticulum membrane. The enzyme catalyses a Delta(7)-sterol + 2 Fe(II)-[cytochrome b5] + O2 + 2 H(+) = a Delta(5),Delta(7)-sterol + 2 Fe(III)-[cytochrome b5] + 2 H2O. It catalyses the reaction lathosterol + 2 Fe(II)-[cytochrome b5] + O2 + 2 H(+) = 7-dehydrocholesterol + 2 Fe(III)-[cytochrome b5] + 2 H2O. It carries out the reaction 5alpha-cholesta-7,24-dien-3beta-ol + 2 Fe(II)-[cytochrome b5] + O2 + 2 H(+) = 7-dehydrodesmosterol + 2 Fe(III)-[cytochrome b5] + 2 H2O. Its pathway is steroid biosynthesis; cholesterol biosynthesis. Catalyzes the penultimate step of the biosynthesis of cholesterol, the dehydrogenation of lathosterol into 7-dehydrocholesterol (7-DHC). Cholesterol is the major sterol component in mammalian membranes and a precursor for bile acid and steroid hormone synthesis. In addition to its essential role in cholesterol biosynthesis, it also indirectly regulates ferroptosis through the production of 7-DHC. By diverting the spread of damage caused by peroxyl radicals from the phospholipid components to its sterol nucleus, 7-DHC prevents this form of cell death. The sequence is that of Lathosterol oxidase from Homo sapiens (Human).